A 232-amino-acid chain; its full sequence is 7-cyano-7-deazaguanine synthase (232 aa).

Residue 8-18 (FSGGQDSTTCL) coordinates ATP. Zn(2+) contacts are provided by C189, C198, C201, and C204.

This sequence belongs to the QueC family. It depends on Zn(2+) as a cofactor.

It carries out the reaction 7-carboxy-7-deazaguanine + NH4(+) + ATP = 7-cyano-7-deazaguanine + ADP + phosphate + H2O + H(+). Its pathway is purine metabolism; 7-cyano-7-deazaguanine biosynthesis. Its function is as follows. Catalyzes the ATP-dependent conversion of 7-carboxy-7-deazaguanine (CDG) to 7-cyano-7-deazaguanine (preQ(0)). The sequence is that of 7-cyano-7-deazaguanine synthase from Proteus mirabilis (strain HI4320).